A 453-amino-acid chain; its full sequence is Protein LOW PSII ACCUMULATION 1, chloroplastic (453 aa).

A chloroplast-targeting transit peptide spans 1-92 (MAVATAPSLN…LDLFKRGRVK (92 aa)). TPR repeat units follow at residues 75–108 (AELCVNTGLDLFKRGRVKDALVQFETALSLAPNP) and 112–145 (QAAYYNKACCHAYRGEGKKAVDCLRIALRDYNLK). 2 consecutive transmembrane segments (helical) span residues 202-222 (FFYFAFAAAAGISMFFTVPRL) and 238-258 (TTGNAAINIGGIVVMVSLFLW).

In terms of assembly, interacts with psbA, but not with psbD, petB, ALB3, LPA2 or LPA3. Is not a component of the PSII complex.

The protein resides in the plastid. It is found in the chloroplast thylakoid membrane. In terms of biological role, chaperone required for efficient photosystem II (PSII) assembly. Binds to psbA during de novo biogenesis of PSII. The sequence is that of Protein LOW PSII ACCUMULATION 1, chloroplastic (LPA1) from Arabidopsis thaliana (Mouse-ear cress).